The primary structure comprises 88 residues: Small ribosomal subunit protein bS20 (88 aa).

It belongs to the bacterial ribosomal protein bS20 family.

In terms of biological role, binds directly to 16S ribosomal RNA. This Maricaulis maris (strain MCS10) (Caulobacter maris) protein is Small ribosomal subunit protein bS20.